We begin with the raw amino-acid sequence, 648 residues long: Leucine aminopeptidase 2 (648 aa).

A peptide contacts are provided by residues 143–145 (QCQ) and 269–274 (PYGGME). A Zn(2+)-binding site is contributed by histidine 298. Glutamate 299 functions as the Proton acceptor in the catalytic mechanism. Residues histidine 302 and glutamate 321 each coordinate Zn(2+). The active-site Proton donor is tyrosine 408.

Belongs to the peptidase M1 family. It depends on Zn(2+) as a cofactor.

It localises to the cytoplasm. The protein localises to the nucleus. It catalyses the reaction an epoxide + H2O = an ethanediol. Aminopeptidase that preferentially cleaves di- and tripeptides. Also has low epoxide hydrolase activity (in vitro). Can hydrolyze the epoxide leukotriene LTA(4) but it forms preferentially 5,6-dihydroxy-7,9,11,14-eicosatetraenoic acid rather than the cytokine leukotriene B(4) as the product compared to the homologous mammalian enzyme (in vitro). The sequence is that of Leucine aminopeptidase 2 from Lodderomyces elongisporus (strain ATCC 11503 / CBS 2605 / JCM 1781 / NBRC 1676 / NRRL YB-4239) (Yeast).